Reading from the N-terminus, the 143-residue chain is Putative aryl-alcohol dehydrogenase AAD15 (143 aa).

Belongs to the aldo/keto reductase family. Aldo/keto reductase 2 subfamily.

Functionally, putative aryl-alcohol dehydrogenase. This is Putative aryl-alcohol dehydrogenase AAD15 (AAD15) from Saccharomyces cerevisiae (strain ATCC 204508 / S288c) (Baker's yeast).